Consider the following 215-residue polypeptide: Adenylate kinase (215 aa).

An ATP-binding site is contributed by 10–15 (GAGKGT). Residues 30–59 (STGDMLRSAIKSGSELGKKAKQVMDAGQLV) form an NMP region. Residues Thr31, Arg36, 57-59 (QLV), 85-88 (GFPR), and Gln92 contribute to the AMP site. The interval 122–159 (GRRVHPGSGRVYHVEHNPPKVEGKDDETGEDLVVRPDD) is LID. ATP contacts are provided by residues Arg123 and 132–133 (VY). Residues 128–151 (GSGRVYHVEHNPPKVEGKDDETGE) are disordered. Positions 133-144 (YHVEHNPPKVEG) are enriched in basic and acidic residues. 2 residues coordinate AMP: Arg156 and Arg167. The segment at 195-215 (KIDGTQPVERVSEQLGDLLRK) is disordered. Gln200 serves as a coordination point for ATP.

It belongs to the adenylate kinase family. Monomer.

Its subcellular location is the cytoplasm. It carries out the reaction AMP + ATP = 2 ADP. The protein operates within purine metabolism; AMP biosynthesis via salvage pathway; AMP from ADP: step 1/1. Functionally, catalyzes the reversible transfer of the terminal phosphate group between ATP and AMP. Plays an important role in cellular energy homeostasis and in adenine nucleotide metabolism. The protein is Adenylate kinase of Idiomarina loihiensis (strain ATCC BAA-735 / DSM 15497 / L2-TR).